The sequence spans 483 residues: uncharacterized protein (483 aa).

Positions 11-71 constitute a TRAM domain; that stretch reads RYRKGDIIEL…SRYLEARAIE (61 aa). [4Fe-4S] cluster contacts are provided by Cys-84, Cys-90, Cys-93, and Cys-187. S-adenosyl-L-methionine contacts are provided by Gln-312, Tyr-341, Glu-362, and Asp-412. Residue Cys-439 is the Nucleophile of the active site.

It belongs to the class I-like SAM-binding methyltransferase superfamily. RNA M5U methyltransferase family.

This is an uncharacterized protein from Chlorobaculum tepidum (strain ATCC 49652 / DSM 12025 / NBRC 103806 / TLS) (Chlorobium tepidum).